Reading from the N-terminus, the 170-residue chain is MKGSRIELGDVTPHNIKQLKRLNQVIFPVSYNDKFYKDVLEVGELAKLAYFNDIAVGAVCCRVDHSQNQKRLYIMTLGCLAPYRRLGIGTKMLNHVLNICEKDGTFDNIYLHVQISNESAIDFYRKFGFEIIETKKNYYKRIEPADAHVLQKNLKISSPGQNADVQKSEN.

The N-acetyltransferase domain occupies 6–155 (IELGDVTPHN…DAHVLQKNLK (150 aa)). A substrate-binding site is contributed by Y31. The active site involves Y73. M75 is a substrate binding site. Residue 77 to 90 (LGCLAPYRRLGIGT) coordinates acetyl-CoA. CoA is bound at residue 79–90 (CLAPYRRLGIGT). H112 is an active-site residue. 117–126 (NESAIDFYRK) serves as a coordination point for CoA. Positions 138–141 (YYKR) are substrate.

This sequence belongs to the acetyltransferase family. GNAT subfamily.

It is found in the cytoplasm. The protein resides in the nucleus. It catalyses the reaction N-terminal L-methionyl-L-alanyl-[protein] + acetyl-CoA = N-terminal N(alpha)-acetyl-L-methionyl-L-alanyl-[protein] + CoA + H(+). The catalysed reaction is N-terminal L-methionyl-L-seryl-[protein] + acetyl-CoA = N-terminal N(alpha)-acetyl-L-methionyl-L-seryl-[protein] + CoA + H(+). The enzyme catalyses N-terminal L-methionyl-L-valyl-[protein] + acetyl-CoA = N-terminal N(alpha)-acetyl-L-methionyl-L-valyl-[protein] + CoA + H(+). It carries out the reaction N-terminal L-methionyl-L-threonyl-[protein] + acetyl-CoA = N-terminal N(alpha)-acetyl-L-methionyl-L-threonyl-[protein] + CoA + H(+). It catalyses the reaction N-terminal L-methionyl-L-lysyl-[protein] + acetyl-CoA = N-terminal N(alpha)-acetyl-L-methionyl-L-lysyl-[protein] + CoA + H(+). The catalysed reaction is N-terminal L-methionyl-L-leucyl-[protein] + acetyl-CoA = N-terminal N(alpha)-acetyl-L-methionyl-L-leucyl-[protein] + CoA + H(+). The enzyme catalyses N-terminal L-methionyl-L-phenylalanyl-[protein] + acetyl-CoA = N-terminal N(alpha)-acetyl-L-methionyl-L-phenylalanyl-[protein] + CoA + H(+). It carries out the reaction N-terminal L-methionyl-L-tyrosyl-[protein] + acetyl-CoA = N-terminal N(alpha)-acetyl-L-methionyl-L-tyrosyl-[protein] + CoA + H(+). In terms of biological role, N-alpha-acetyltransferase that acetylates the N-terminus of proteins that retain their initiating methionine. Has a broad substrate specificity: able to acetylate the initiator methionine of most peptides, except for those with a proline in second position. Also displays N-epsilon-acetyltransferase activity by mediating acetylation of the side chain of specific lysines on proteins. The relevance of N-epsilon-acetyltransferase activity is however unclear. Required for sister chromatid cohesion during mitosis by promoting binding of CDCA5/sororin to cohesin. This is N-alpha-acetyltransferase 50 (naa50) from Xenopus laevis (African clawed frog).